Here is a 721-residue protein sequence, read N- to C-terminus: Glucans biosynthesis glucosyltransferase H (721 aa).

A run of 6 helical transmembrane segments spans residues 52–72, 97–117, 412–432, 459–479, 505–525, and 570–590; these read CSWRRVFVVGFALLISAFAIF, NFCWIALAFSSSIAGFFVLAS, SPFWLLLILSGLLLALQAHFI, FYITMGILFSPKIFGLLLLMF, ALVAPIMMLIHCGAVVSILFG, and LLAWMSPALIGLWFSVPLSGI.

This sequence belongs to the glycosyltransferase 2 family. OpgH subfamily.

It localises to the cell inner membrane. It functions in the pathway glycan metabolism; osmoregulated periplasmic glucan (OPG) biosynthesis. Its function is as follows. Involved in the biosynthesis of osmoregulated periplasmic glucans (OPGs). This Vibrio cholerae serotype O1 (strain ATCC 39541 / Classical Ogawa 395 / O395) protein is Glucans biosynthesis glucosyltransferase H.